The following is a 200-amino-acid chain: UPF0301 protein BR0480/BS1330_I0481 (200 aa).

This sequence belongs to the UPF0301 (AlgH) family.

The chain is UPF0301 protein BR0480/BS1330_I0481 from Brucella suis biovar 1 (strain 1330).